We begin with the raw amino-acid sequence, 427 residues long: Enolase (427 aa).

Gln-163 contributes to the (2R)-2-phosphoglycerate binding site. Glu-205 functions as the Proton donor in the catalytic mechanism. Residues Asp-242, Glu-285, and Asp-312 each contribute to the Mg(2+) site. Lys-337, Arg-366, Ser-367, and Lys-388 together coordinate (2R)-2-phosphoglycerate. Lys-337 serves as the catalytic Proton acceptor.

It belongs to the enolase family. Mg(2+) serves as cofactor.

The protein localises to the cytoplasm. It is found in the secreted. The protein resides in the cell surface. It catalyses the reaction (2R)-2-phosphoglycerate = phosphoenolpyruvate + H2O. It participates in carbohydrate degradation; glycolysis; pyruvate from D-glyceraldehyde 3-phosphate: step 4/5. In terms of biological role, catalyzes the reversible conversion of 2-phosphoglycerate (2-PG) into phosphoenolpyruvate (PEP). It is essential for the degradation of carbohydrates via glycolysis. The polypeptide is Enolase (Rhodopseudomonas palustris (strain HaA2)).